The primary structure comprises 239 residues: Adapter protein MecA (239 aa).

The segment covering 118 to 128 (EQRTKEKEAQG) has biased composition (basic and acidic residues). The tract at residues 118–137 (EQRTKEKEAQGSKRQKSSAR) is disordered.

The protein belongs to the MecA family. Homodimer.

In terms of biological role, enables the recognition and targeting of unfolded and aggregated proteins to the ClpC protease or to other proteins involved in proteolysis. In Staphylococcus aureus (strain JH1), this protein is Adapter protein MecA.